The sequence spans 125 residues: Protein MGF 110-4L (125 aa).

A signal peptide spans 1–29; that stretch reads MLVVFFLGILGLLANQILGLPTQAGGHLR. N-linked (GlcNAc...) asparagine; by host glycosylation occurs at N65. The Prevents secretion from ER motif lies at 122-125; that stretch reads KEDL.

It belongs to the asfivirus MGF 110 family.

It localises to the virion. Its subcellular location is the host endoplasmic reticulum-Golgi intermediate compartment. Causes the redistribution of lumenal ER protein to an enlarged ERGIC compartment. The protein is Protein MGF 110-4L of Ornithodoros (relapsing fever ticks).